The primary structure comprises 193 residues: Holliday junction branch migration complex subunit RuvA (193 aa).

The interval 1–64 (MITSLTGTIL…EDAHLLYGFM (64 aa)) is domain I. The interval 65–139 (TVAERDMFRL…DKMGGIAPGP (75 aa)) is domain II. A flexible linker region spans residues 139-143 (PMGRG). A domain III region spans residues 144 to 193 (GAGDPRQEAIAALLTLGYKPAQASQAIAGLADGLGLEDLIRQSLQNLSRH).

It belongs to the RuvA family. Homotetramer. Forms an RuvA(8)-RuvB(12)-Holliday junction (HJ) complex. HJ DNA is sandwiched between 2 RuvA tetramers; dsDNA enters through RuvA and exits via RuvB. An RuvB hexamer assembles on each DNA strand where it exits the tetramer. Each RuvB hexamer is contacted by two RuvA subunits (via domain III) on 2 adjacent RuvB subunits; this complex drives branch migration. In the full resolvosome a probable DNA-RuvA(4)-RuvB(12)-RuvC(2) complex forms which resolves the HJ.

It is found in the cytoplasm. The RuvA-RuvB-RuvC complex processes Holliday junction (HJ) DNA during genetic recombination and DNA repair, while the RuvA-RuvB complex plays an important role in the rescue of blocked DNA replication forks via replication fork reversal (RFR). RuvA specifically binds to HJ cruciform DNA, conferring on it an open structure. The RuvB hexamer acts as an ATP-dependent pump, pulling dsDNA into and through the RuvAB complex. HJ branch migration allows RuvC to scan DNA until it finds its consensus sequence, where it cleaves and resolves the cruciform DNA. This chain is Holliday junction branch migration complex subunit RuvA, found in Acidithiobacillus ferrooxidans (strain ATCC 53993 / BNL-5-31) (Leptospirillum ferrooxidans (ATCC 53993)).